The following is a 201-amino-acid chain: Holliday junction branch migration complex subunit RuvA (201 aa).

Residues 1–64 (MFNSISGILS…EDQMRLFGFP (64 aa)) form a domain I region. The tract at residues 65 to 140 (NQAERSLFLD…KLTNLNEVSS (76 aa)) is domain II. The flexible linker stretch occupies residues 140-144 (SKGQA). Residues 145–201 (SVSCEYEDIVTALTEMGFERKSVIVQVEKIAEEMKAAGSDPLKNEEELFRRSIVALS) are domain III.

Belongs to the RuvA family. Homotetramer. Forms an RuvA(8)-RuvB(12)-Holliday junction (HJ) complex. HJ DNA is sandwiched between 2 RuvA tetramers; dsDNA enters through RuvA and exits via RuvB. An RuvB hexamer assembles on each DNA strand where it exits the tetramer. Each RuvB hexamer is contacted by two RuvA subunits (via domain III) on 2 adjacent RuvB subunits; this complex drives branch migration. In the full resolvosome a probable DNA-RuvA(4)-RuvB(12)-RuvC(2) complex forms which resolves the HJ.

It is found in the cytoplasm. In terms of biological role, the RuvA-RuvB-RuvC complex processes Holliday junction (HJ) DNA during genetic recombination and DNA repair, while the RuvA-RuvB complex plays an important role in the rescue of blocked DNA replication forks via replication fork reversal (RFR). RuvA specifically binds to HJ cruciform DNA, conferring on it an open structure. The RuvB hexamer acts as an ATP-dependent pump, pulling dsDNA into and through the RuvAB complex. HJ branch migration allows RuvC to scan DNA until it finds its consensus sequence, where it cleaves and resolves the cruciform DNA. The protein is Holliday junction branch migration complex subunit RuvA of Treponema denticola (strain ATCC 35405 / DSM 14222 / CIP 103919 / JCM 8153 / KCTC 15104).